Reading from the N-terminus, the 360-residue chain is Decorin (360 aa).

The N-terminal stretch at 1–16 (MKATIIFLLVAQVSWA) is a signal peptide. A propeptide spanning residues 17-30 (GPFQQKGLFDFMLE) is cleaved from the precursor. O-linked (Xyl...) (glycosaminoglycan) serine glycosylation is present at Ser-34. 2 disulfide bridges follow: Cys-55/Cys-61 and Cys-59/Cys-68. LRR repeat units lie at residues 74–94 (EKVPKDLPPDTALLDLQNNKI), 95–118 (TEIKDGDFKNLKNLHTLILINNKI), 119–142 (SKISPGAFAPLVKLERLYLSKNQL), 143–163 (KELPEKMPKTLQELRVHENEI), 164–187 (TKVRKSVFNGLNQMIVVELGTNPL), 188–213 (KSSGIENGAFQGMKKLSYIRIADTNI), 214–234 (TTIPQGLPPSLTELHLDGNKI), 235–258 (TKVDAASLKGLNNLAKLGLSFNSI), 259–282 (SAVDNGSLANTPHLRELHLNNNKL), 283–305 (VKVPGGLADHKYIQVVYLHNNNI), 306–335 (SAIGSNDFCPPGYNTKKASYSGVSLFSNPV), and 336–360 (QYWEIQPSTFRCVYVRAAVQLGNYK). Asn-212 carries an N-linked (GlcNAc...) asparagine glycan. N-linked (GlcNAc...) asparagine glycans are attached at residues Asn-263 and Asn-304. Residues Cys-314 and Cys-347 are joined by a disulfide bond.

It belongs to the small leucine-rich proteoglycan (SLRP) family. SLRP class I subfamily. As to quaternary structure, binds to type I and type II collagen, fibronectin and TGF-beta. Forms a ternary complex with MFAP2 and ELN. Interacts with DPT. In terms of processing, the attached glycosaminoglycan chain can be either chondroitin 4-sulfate, chondroitin 6-sulfate or dermatan sulfate, depending upon the tissue of origin.

The protein resides in the secreted. Its subcellular location is the extracellular space. It is found in the extracellular matrix. In terms of biological role, may affect the rate of fibrils formation. The chain is Decorin (DCN) from Bos taurus (Bovine).